We begin with the raw amino-acid sequence, 316 residues long: MLKSNKVVLIGAGGVGSSFAYALTIDNSLVHELVIIDVNENKAKGEVMDLNHGQMFLKKNINVLFGTYKDCANADIVVITAGLNQKPGETRLDLVDKNSKIFKDIITNVVSSGFDGIFVVASNPVDIMTYVTMKYSKFPIHKVIGTGTILDTSRLRYFLSDHFNVNTQNIHSYIMGEHGDSSFATWDETKIAMKPLSEYLAEGKITELELDEIHKKVVNAAYEVIKLKGATYYAIGLGIKNIVNAIIGDQNVILPISSYINGQYGGLIKDIYIGAPAIVCKEGVKEVLNFKISPKELDKFNSSANQLKSYIDKMEF.

Residues V15, D37, K42, Y68, and 82–83 (GL) contribute to the NAD(+) site. Residues Q85, R91, and 123-126 (NPVD) each bind substrate. NAD(+) is bound by residues 121-123 (ASN) and T146. Substrate is bound at residue 151–154 (DTSR). 2 residues coordinate beta-D-fructose 1,6-bisphosphate: R156 and H171. H178 functions as the Proton acceptor in the catalytic mechanism. Y222 is subject to Phosphotyrosine. T231 lines the substrate pocket.

It belongs to the LDH/MDH superfamily. LDH family. Homotetramer.

It is found in the cytoplasm. The catalysed reaction is (S)-lactate + NAD(+) = pyruvate + NADH + H(+). The protein operates within fermentation; pyruvate fermentation to lactate; (S)-lactate from pyruvate: step 1/1. With respect to regulation, allosterically activated by fructose 1,6-bisphosphate (FBP). Catalyzes the conversion of lactate to pyruvate. The polypeptide is L-lactate dehydrogenase (Borreliella burgdorferi (strain ATCC 35210 / DSM 4680 / CIP 102532 / B31) (Borrelia burgdorferi)).